A 553-amino-acid polypeptide reads, in one-letter code: Undecaprenyl phosphate-alpha-4-amino-4-deoxy-L-arabinose arabinosyl transferase (553 aa).

A run of 11 helical transmembrane segments spans residues 6 to 26, 89 to 109, 115 to 135, 180 to 200, 208 to 228, 258 to 278, 293 to 313, 317 to 337, 352 to 372, 386 to 406, and 410 to 430; these read ACKVGAFLMALFFVITYLLPL, FGSVFCIFISAILLYRLAMMM, IAFATSLIYISMFLVFAIGTY, FMTKGFLALAVPVIVMLPIVI, IVCFGPLAIISAIAISLPWVI, IAPFWYYIPILILGVIPWLGL, NPEMFFLLCWFVVPLLFFSIA, LPTYILPCMAPLAMMMAKFGV, GMVNVFLGLLAVIVLFAMEVV, WVLAIVAFGIWGIIGYLCFAL, and YWLLAAFCSIVVSLVIGHALP.

It belongs to the glycosyltransferase 83 family.

It is found in the cell inner membrane. It carries out the reaction 4-amino-4-deoxy-alpha-L-arabinopyranosyl di-trans,octa-cis-undecaprenyl phosphate + lipid IVA = lipid IIA + di-trans,octa-cis-undecaprenyl phosphate.. Its pathway is lipopolysaccharide metabolism; 4-amino-4-deoxy-beta-L-arabinose-lipid A biosynthesis. Its function is as follows. Catalyzes the transfer of the L-Ara4N moiety of the glycolipid undecaprenyl phosphate-alpha-L-Ara4N to lipid A. The modified arabinose is attached to lipid A and is required for resistance to polymyxin and cationic antimicrobial peptides. This chain is Undecaprenyl phosphate-alpha-4-amino-4-deoxy-L-arabinose arabinosyl transferase (arnT), found in Photorhabdus laumondii subsp. laumondii (strain DSM 15139 / CIP 105565 / TT01) (Photorhabdus luminescens subsp. laumondii).